Consider the following 33-residue polypeptide: Brevinin-2Ea (33 aa).

A disulfide bond links Cys-27 and Cys-33.

The protein belongs to the frog skin active peptide (FSAP) family. Brevinin subfamily. Expressed by the skin glands.

The protein localises to the secreted. Functionally, shows antibacterial activity against representative Gram-negative and Gram-positive bacterial species, and hemolytic activity. This is Brevinin-2Ea from Pelophylax lessonae (Pool frog).